A 611-amino-acid chain; its full sequence is UvrABC system protein C (611 aa).

Positions 6–84 (NNPGVYRMFN…IKRLRPRFNV (79 aa)) constitute a GIY-YIG domain. Residues 194–229 (QSVKDHLAAAMQAASADLDFEHAAVYRDRLAALSHV) enclose the UVR domain.

The protein belongs to the UvrC family. In terms of assembly, interacts with UvrB in an incision complex.

It is found in the cytoplasm. The UvrABC repair system catalyzes the recognition and processing of DNA lesions. UvrC both incises the 5' and 3' sides of the lesion. The N-terminal half is responsible for the 3' incision and the C-terminal half is responsible for the 5' incision. This is UvrABC system protein C from Brucella abortus (strain 2308).